Consider the following 575-residue polypeptide: Eukaryotic translation initiation factor 3 subunit D (575 aa).

Disordered regions lie at residues Pro36–Arg66 and Ser103–Val177. Basic and acidic residues predominate over residues Lys39–Gly59. Residues Phe109–Gly144 show a composition bias toward gly residues. Positions Gly163–Asp174 are enriched in basic and acidic residues. Residues Asn302–Pro316 form an RNA gate region.

This sequence belongs to the eIF-3 subunit D family. In terms of assembly, component of the eukaryotic translation initiation factor 3 (eIF-3) complex.

The protein resides in the cytoplasm. Functionally, mRNA cap-binding component of the eukaryotic translation initiation factor 3 (eIF-3) complex, which is involved in protein synthesis of a specialized repertoire of mRNAs and, together with other initiation factors, stimulates binding of mRNA and methionyl-tRNAi to the 40S ribosome. The eIF-3 complex specifically targets and initiates translation of a subset of mRNAs involved in cell proliferation. In the eIF-3 complex, eif3d specifically recognizes and binds the 7-methylguanosine cap of a subset of mRNAs. The sequence is that of Eukaryotic translation initiation factor 3 subunit D from Phaeosphaeria nodorum (strain SN15 / ATCC MYA-4574 / FGSC 10173) (Glume blotch fungus).